Reading from the N-terminus, the 252-residue chain is Putative cytosolic acyl coenzyme A thioester hydrolase-like (252 aa).

2 HotDog ACOT-type domains span residues 1 to 90 (MIKE…LSLT) and 146 to 252 (SYSQ…SVFT).

Homodimer. As to expression, expressed in all tissues examined. Up-regulated in nasopharyngeal carcinoma (at protein level).

It is found in the cytoplasm. The catalysed reaction is hexadecanoyl-CoA + H2O = hexadecanoate + CoA + H(+). Acyl-CoA thioesterases are a group of enzymes that catalyze the hydrolysis of acyl-CoAs to the free fatty acid and coenzyme A (CoASH), providing the potential to regulate intracellular levels of acyl-CoAs, free fatty acids and CoASH. The protein is Putative cytosolic acyl coenzyme A thioester hydrolase-like (ACOT7L) of Homo sapiens (Human).